The following is a 255-amino-acid chain: Endonuclease 8 2 (255 aa).

P2 serves as the catalytic Schiff-base intermediate with DNA. E3 acts as the Proton donor in catalysis. K51 serves as the catalytic Proton donor; for beta-elimination activity. The DNA site is built by Q67 and N164. The segment at 221 to 255 (WVYGRAGQGCRRCGTLIAYDTTDERVRYWCPACQR) adopts an FPG-type zinc-finger fold. R245 serves as the catalytic Proton donor; for delta-elimination activity.

Belongs to the FPG family. Zn(2+) serves as cofactor.

The catalysed reaction is 2'-deoxyribonucleotide-(2'-deoxyribose 5'-phosphate)-2'-deoxyribonucleotide-DNA = a 3'-end 2'-deoxyribonucleotide-(2,3-dehydro-2,3-deoxyribose 5'-phosphate)-DNA + a 5'-end 5'-phospho-2'-deoxyribonucleoside-DNA + H(+). Involved in base excision repair of DNA damaged by oxidation or by mutagenic agents. Acts as a DNA glycosylase that recognizes and removes damaged bases. Has AP (apurinic/apyrimidinic) lyase activity and introduces nicks in the DNA strand. Cleaves the DNA backbone by beta-delta elimination to generate a single-strand break at the site of the removed base with both 3'- and 5'-phosphates. This is Endonuclease 8 2 (nei2) from Mycobacterium bovis (strain ATCC BAA-935 / AF2122/97).